A 478-amino-acid polypeptide reads, in one-letter code: Cysteine--tRNA ligase (478 aa).

Cys-37 serves as a coordination point for Zn(2+). Positions 39–49 (PTVYHYAHIGN) match the 'HIGH' region motif. Cys-224, His-249, and Glu-253 together coordinate Zn(2+). The 'KMSKS' region signature appears at 281-285 (KMSKS). Lys-284 is a binding site for ATP.

The protein belongs to the class-I aminoacyl-tRNA synthetase family. In terms of assembly, monomer. The cofactor is Zn(2+).

The protein localises to the cytoplasm. The enzyme catalyses tRNA(Cys) + L-cysteine + ATP = L-cysteinyl-tRNA(Cys) + AMP + diphosphate. The protein is Cysteine--tRNA ligase of Protochlamydia amoebophila (strain UWE25).